Reading from the N-terminus, the 557-residue chain is Inositol-3-phosphate synthase 1 (557 aa).

21 residues coordinate NAD(+): G67, G68, N69, N70, D141, S177, V178, Q188, R191, T228, A229, N230, T231, G278, S279, D303, S306, N337, N338, D339, and K352. S279 is subject to Phosphoserine. S357 is subject to Phosphoserine. NAD(+)-binding residues include G390, D391, D419, and S420. Residues 514–557 form a disordered region; it reads GIKPEEVKATSPLPCKKESTPATNGCTGDANGHTQAPTPELSTA. A Phosphoserine modification is found at S524. Over residues 533–557 the composition is skewed to polar residues; it reads TPATNGCTGDANGHTQAPTPELSTA.

Belongs to the myo-inositol 1-phosphate synthase family. Homotrimer. NAD(+) is required as a cofactor. In terms of processing, phosphorylation at Ser-524 does not appear to affect enzyme activity, and is detected in brain and testis. As to expression, expressed in testis, brain and epididymis (at protein level). Moderately expressed in brain, lung, liver, and kidney. Low expression in heart and spleen. Very low expression in skeletal muscle. Expressed in testis, spleen, heart, brainstem, hippocampus, cerebellum, cortex and amygdala. Absent or very lowly expressed in intestine, lung and muscle. In terms of tissue distribution, expressed in intestine, lung, liver, muscle, testis, spleen, brainstem, hippocampus, cerebellum, cortex and amygdala. Absent or lowly expressed in heart and kidney. As to expression, expressed in intestine (at protein level).

It localises to the cytoplasm. The catalysed reaction is D-glucose 6-phosphate = 1D-myo-inositol 3-phosphate. The protein operates within polyol metabolism; myo-inositol biosynthesis; myo-inositol from D-glucose 6-phosphate: step 1/2. Its activity is regulated as follows. Inhibited by 2-deoxyglucitol 6-phosphate (dgtolP) and 2-deoxy-D-glucose 6-phosphate. Inhibited by copper, mercury, cadmium, zinc and copper ions. Activated by potassium and ammonium ions. In terms of biological role, key enzyme in myo-inositol biosynthesis pathway that catalyzes the conversion of glucose 6-phosphate to 1-myo-inositol 1-phosphate in a NAD-dependent manner. Rate-limiting enzyme in the synthesis of all inositol-containing compounds. Key enzyme in myo-inositol biosynthesis pathway that catalyzes the conversion of glucose 6-phosphate to 1-myo-inositol 1-phosphate in a NAD-dependent manner. Its function is as follows. Competitively inhibits the function of isoform 1, presumably by competing for NAD cofactor. The polypeptide is Inositol-3-phosphate synthase 1 (Isyna1) (Rattus norvegicus (Rat)).